The sequence spans 288 residues: Protein RepA (288 aa).

This sequence belongs to the initiator RepB protein family.

Its function is as follows. This protein is essential for plasmid replication; it is involved in copy control functions. This is Protein RepA (repA) from Escherichia coli.